A 325-amino-acid chain; its full sequence is mRNA decay factor CTH1 (325 aa).

C3H1-type zinc fingers lie at residues 204-232 (LYKT…HGLN) and 242-270 (NYRT…HGDD). The interval 284 to 306 (SKDTALTPLPTSLAPSNNDNITN) is disordered. Positions 292–306 (LPTSLAPSNNDNITN) are enriched in polar residues.

Functionally, binds to specific AU-rich elements (ARE) in the 3'-untranslated region of target mRNAs and promotes their degradation. In response to iron deficiency, promotes the decay of many mRNAs encoding proteins involved in iron-dependent pathways. Negatively regulates primarily iron-dependent mitochondrial processes including respiration and amino acid biosynthesis. The chain is mRNA decay factor CTH1 (CTH1) from Saccharomyces cerevisiae (strain ATCC 204508 / S288c) (Baker's yeast).